A 577-amino-acid polypeptide reads, in one-letter code: Moesin (577 aa).

Residues 2 to 295 (PKTISVRVTT…GNHELYMRRR (294 aa)) enclose the FERM domain. Phosphoserine is present on Ser-74. At Lys-79 the chain carries N6-acetyllysine. Lys-83 bears the N6-succinyllysine mark. The short motif at 115-120 (IYCPPE) is the [IL]-x-C-x-x-[DE] motif element. The residue at position 116 (Tyr-116) is a Phosphotyrosine. Cys-117 carries the post-translational modification S-nitrosocysteine. 2 positions are modified to N6-acetyllysine: Lys-139 and Lys-165. Disordered stretches follow at residues 322 to 342 (LLEN…KIER), 358 to 419 (TKKA…QLAS), and 468 to 518 (STPH…NERV). Basic and acidic residues predominate over residues 358–401 (TKKAQQELEEQTRRALELEQERKRAQSEAEKLAKERQEAEEAKE). Ser-407 carries the post-translational modification Phosphoserine. Over residues 492 to 518 (AELRADAMAKDRSEEERTTEAEKNERV) the composition is skewed to basic and acidic residues. Phosphoserine is present on Ser-527. Thr-558 carries the phosphothreonine; by ROCK2 and STK10 modification.

As to quaternary structure, in resting T-cells, part of a PAG1-NHERF1-MSN complex which is disrupted upon TCR activation. Interacts with NHERF1. Interacts with PPP1R16B. Interacts with SELPLG and SYK; these interactions mediate the activation of SYK by SELPLG. Interacts with PDPN (via cytoplasmic domain); this interaction activates RHOA and promotes epithelial-mesenchymal transition. Interacts with SPN/CD43 cytoplasmic tail. Interacts with CD44. Interacts with ICAM2. Interacts with ICAM3 (via C-terminus). Interacts with PDZD8. Interacts with F-actin. Interacts with CD46. Interacts with PTPN6. In terms of processing, phosphorylation on Thr-558 by STK10 negatively regulates lymphocyte migration and polarization. Phosphorylation on Thr-558 is crucial for the formation of microvilli-like structures. Phosphorylation by ROCK2 suppresses the head-to-tail association of the N-terminal and C-terminal halves resulting in an opened conformation which is capable of actin and membrane-binding. S-nitrosylation of Cys-117 is induced by interferon-gamma and oxidatively-modified low-densitity lipoprotein (LDL(ox)) implicating the iNOS-S100A8/9 transnitrosylase complex.

Its subcellular location is the cell membrane. The protein localises to the cytoplasm. It localises to the cytoskeleton. It is found in the apical cell membrane. The protein resides in the cell projection. Its subcellular location is the microvillus membrane. The protein localises to the microvillus. Functionally, ezrin-radixin-moesin (ERM) family protein that connects the actin cytoskeleton to the plasma membrane and thereby regulates the structure and function of specific domains of the cell cortex. Tethers actin filaments by oscillating between a resting and an activated state providing transient interactions between moesin and the actin cytoskeleton. Once phosphorylated on its C-terminal threonine, moesin is activated leading to interaction with F-actin and cytoskeletal rearrangement. These rearrangements regulate many cellular processes, including cell shape determination, membrane transport, and signal transduction. The role of moesin is particularly important in immunity acting on both T and B-cells homeostasis and self-tolerance, regulating lymphocyte egress from lymphoid organs. Modulates phagolysosomal biogenesis in macrophages. Also participates in immunologic synapse formation. This Mus musculus (Mouse) protein is Moesin.